A 660-amino-acid chain; its full sequence is Acetyl-coenzyme A synthetase (660 aa).

CoA-binding positions include 197-200 and threonine 317; that span reads RGGK. ATP-binding positions include 397–399, 421–426, aspartate 512, and arginine 528; these read GEP and DTWWQT. Serine 536 serves as a coordination point for CoA. An ATP-binding site is contributed by arginine 539. 2 residues coordinate Mg(2+): valine 550 and valine 555. Position 625 is an N6-acetyllysine (lysine 625).

It belongs to the ATP-dependent AMP-binding enzyme family. Mg(2+) is required as a cofactor. In terms of processing, acetylated. Deacetylation by the SIR2-homolog deacetylase activates the enzyme.

It catalyses the reaction acetate + ATP + CoA = acetyl-CoA + AMP + diphosphate. Catalyzes the conversion of acetate into acetyl-CoA (AcCoA), an essential intermediate at the junction of anabolic and catabolic pathways. AcsA undergoes a two-step reaction. In the first half reaction, AcsA combines acetate with ATP to form acetyl-adenylate (AcAMP) intermediate. In the second half reaction, it can then transfer the acetyl group from AcAMP to the sulfhydryl group of CoA, forming the product AcCoA. The protein is Acetyl-coenzyme A synthetase of Paraburkholderia phymatum (strain DSM 17167 / CIP 108236 / LMG 21445 / STM815) (Burkholderia phymatum).